A 354-amino-acid chain; its full sequence is Fructose-bisphosphate aldolase (354 aa).

Ser50 contacts D-glyceraldehyde 3-phosphate. Asp83 functions as the Proton donor in the catalytic mechanism. Residues His84, Asp105, Glu142, and His198 each contribute to the Zn(2+) site. Gly199 provides a ligand contact to dihydroxyacetone phosphate. His232 contacts Zn(2+). Dihydroxyacetone phosphate is bound by residues 233–235 (GSS) and 275–278 (NIDT).

Belongs to the class II fructose-bisphosphate aldolase family. The cofactor is Zn(2+).

It carries out the reaction beta-D-fructose 1,6-bisphosphate = D-glyceraldehyde 3-phosphate + dihydroxyacetone phosphate. It participates in carbohydrate degradation; glycolysis; D-glyceraldehyde 3-phosphate and glycerone phosphate from D-glucose: step 4/4. In terms of biological role, catalyzes the aldol condensation of dihydroxyacetone phosphate (DHAP or glycerone-phosphate) with glyceraldehyde 3-phosphate (G3P) to form fructose 1,6-bisphosphate (FBP) in gluconeogenesis and the reverse reaction in glycolysis. In Stutzerimonas stutzeri (Pseudomonas stutzeri), this protein is Fructose-bisphosphate aldolase (fba).